A 220-amino-acid chain; its full sequence is Ribose-5-phosphate isomerase A (220 aa).

Substrate contacts are provided by residues 28 to 31 (TGST), 81 to 84 (DGAD), and 94 to 97 (KGGG). Glu-103 functions as the Proton acceptor in the catalytic mechanism. Residue Lys-121 coordinates substrate.

It belongs to the ribose 5-phosphate isomerase family. In terms of assembly, homodimer.

The enzyme catalyses aldehydo-D-ribose 5-phosphate = D-ribulose 5-phosphate. It functions in the pathway carbohydrate degradation; pentose phosphate pathway; D-ribose 5-phosphate from D-ribulose 5-phosphate (non-oxidative stage): step 1/1. In terms of biological role, catalyzes the reversible conversion of ribose-5-phosphate to ribulose 5-phosphate. This chain is Ribose-5-phosphate isomerase A, found in Vesicomyosocius okutanii subsp. Calyptogena okutanii (strain HA).